Here is a 353-residue protein sequence, read N- to C-terminus: Photosystem II D2 protein (353 aa).

At threonine 2 the chain carries N-acetylthreonine. Phosphothreonine is present on threonine 2. Residues 41–61 traverse the membrane as a helical segment; sequence CAYFALGGWFTGTTFVTSWYT. Histidine 118 lines the chlorophyll a pocket. A helical transmembrane segment spans residues 125 to 141; the sequence is GFMLRQFELARSVQLRP. Positions 130 and 143 each coordinate pheophytin a. The chain crosses the membrane as a helical span at residues 153-166; it reads VFVSVFLIYPLGQS. Histidine 198 provides a ligand contact to chlorophyll a. Residues 208–228 form a helical membrane-spanning segment; sequence AALLCAIHGATVENTLFEDGD. A plastoquinone contacts are provided by histidine 215 and phenylalanine 262. A Fe cation-binding site is contributed by histidine 215. Residue histidine 269 participates in Fe cation binding. A helical transmembrane segment spans residues 279 to 295; it reads GLWMSALGVVGLALNLR.

Belongs to the reaction center PufL/M/PsbA/D family. PSII is composed of 1 copy each of membrane proteins PsbA, PsbB, PsbC, PsbD, PsbE, PsbF, PsbH, PsbI, PsbJ, PsbK, PsbL, PsbM, PsbT, PsbX, PsbY, PsbZ, Psb30/Ycf12, at least 3 peripheral proteins of the oxygen-evolving complex and a large number of cofactors. It forms dimeric complexes. The D1/D2 heterodimer binds P680, chlorophylls that are the primary electron donor of PSII, and subsequent electron acceptors. It shares a non-heme iron and each subunit binds pheophytin, quinone, additional chlorophylls, carotenoids and lipids. There is also a Cl(-1) ion associated with D1 and D2, which is required for oxygen evolution. The PSII complex binds additional chlorophylls, carotenoids and specific lipids. serves as cofactor.

The protein resides in the plastid. It localises to the chloroplast thylakoid membrane. It carries out the reaction 2 a plastoquinone + 4 hnu + 2 H2O = 2 a plastoquinol + O2. Its function is as follows. Photosystem II (PSII) is a light-driven water:plastoquinone oxidoreductase that uses light energy to abstract electrons from H(2)O, generating O(2) and a proton gradient subsequently used for ATP formation. It consists of a core antenna complex that captures photons, and an electron transfer chain that converts photonic excitation into a charge separation. The D1/D2 (PsbA/PsbD) reaction center heterodimer binds P680, the primary electron donor of PSII as well as several subsequent electron acceptors. D2 is needed for assembly of a stable PSII complex. This is Photosystem II D2 protein from Spinacia oleracea (Spinach).